The primary structure comprises 1169 residues: Rabankyrin-5 (1169 aa).

The residue at position 2 (Ala-2) is an N-acetylalanine. The BTB domain maps to 68-130; the sequence is SDLKIKVGDR…IYTDELEFRE (63 aa). ANK repeat units follow at residues 217–247, 255–284, 288–317, 322–362, and 366–396; these read KTEY…QLPG, NGDL…DVDM, NGWS…LVNA, AQET…NPNM, and KGRT…DLEL. Residue Ser-270 is modified to Phosphoserine. The NPF signature appears at 421 to 423; it reads NPF. ANK repeat units lie at residues 490–519, 542–572, 588–617, 621–650, 654–683, 687–716, 724–753, 769–798, 802–832, 836–865, 870–899, 905–934, 938–967, 971–1001, 1005–1037, and 1043–1072; these read WGET…NPNL, YLQT…ALHA, RDQT…SIND, DGQT…DINV, DGET…DMSV, KGNP…DATC, CLQT…DVNS, DGQT…NVNA, EGRT…ELSV, QGLT…GAAE, KGRN…NVNS, SKLT…KVNE, HRQT…DFAA, NGNN…DAEA, RGQS…EYPL, and EGNT…RLGV. The interval 650–759 is interaction with RHOD and RAB5A; it reads VRTQDGETAL…DVNSPRQPGT (110 aa). The FYVE-type zinc finger occupies 1104 to 1164; that stretch reads WCDGSNCYEC…VCNICFDVLT (61 aa). Zn(2+) contacts are provided by Cys-1110, Cys-1113, Cys-1126, Cys-1129, Cys-1134, Cys-1137, Cys-1156, and Cys-1159.

As to quaternary structure, interacts with RAB5A (in GTP-bound form). Interacts with RHOD (independent of GTP-loaded status). Interacts with EHD1. Interacts with VPS26A; the interaction is independent of EHD1 and is indicative for an association with the cargo recognition subcomplex of the retromer complex. Expressed in kidney proximal tubule epithelial cells; at protein level.

It localises to the cytoplasm. It is found in the endosome membrane. The protein resides in the cytoplasmic vesicle. Proposed effector of Rab5. Binds to phosphatidylinositol 3-phosphate (PI(3)P). Involved in homotypic early endosome fusion and to a lesser extent in heterotypic fusion of chlathrin-coated vesicles with early endosomes. Required for correct endosomal localization. Involved in the internalization and trafficking of activated tyrosine kinase receptors such as PDGFRB. Regulates the subcellular localization of the retromer complex in a EHD1-dependent manner. Involved in endosome-to-Golgi transport and biosynthetic transport to late endosomes and lysosomes indicative for a regulation of retromer complex-mediated retrograde transport. Involved in macropinocytosis; the function is dependent on Rab5-GTP. The chain is Rabankyrin-5 (Ankfy1) from Mus musculus (Mouse).